A 1478-amino-acid chain; its full sequence is Adhesion G protein-coupled receptor L2 (1478 aa).

The first 25 residues, 1 to 25 (MVSSGCRMRSLWFIIIISFLPNTEG), serve as a signal peptide directing secretion. The Extracellular segment spans residues 26 to 855 (FSRAALPFGL…VHELLLTVIT (830 aa)). An SUEL-type lectin domain is found at 41 to 130 (SCEGYSIDLR…KYLEVQYECV (90 aa)). The N-linked (GlcNAc...) asparagine glycan is linked to asparagine 99. The region spanning 139-398 (VCPGTLKAIV…ILRYSLEFGP (260 aa)) is the Olfactomedin-like domain. Cysteine 140 and cysteine 322 are oxidised to a cystine. Residue asparagine 335 is glycosylated (N-linked (GlcNAc...) asparagine). The interval 422–458 (VSTTSTTSQKGPMSTTVAGSQEGSKGTKAPPAVSTTK) is disordered. Over residues 430–445 (QKGPMSTTVAGSQEGS) the composition is skewed to polar residues. N-linked (GlcNAc...) asparagine glycans are attached at residues asparagine 524, asparagine 633, asparagine 735, asparagine 748, asparagine 791, asparagine 796, and asparagine 817. The GAIN-B domain occupies 663–841 (TRVSMPTENI…AILMAHREIA (179 aa)). Disulfide bonds link cysteine 792/cysteine 823 and cysteine 811/cysteine 825. The GPS stretch occupies residues 792 to 841 (CSFWNYSERTMMGYWSTQGCKLVDTNKTRTTCACSHLTNFAILMAHREIA). A helical membrane pass occupies residues 856 to 876 (WVGIVISLVCLAICIFTFCFF). At 877–884 (RGLQSDRN) the chain is on the cytoplasmic side. A helical membrane pass occupies residues 885–905 (TIHKNLCINLFIAEFIFLIGI). Residues 906–911 (DKTKYM) are Extracellular-facing. The helical transmembrane segment at 912-932 (IACPIFAGLLHFFFLAAFAWM) threads the bilayer. The Cytoplasmic portion of the chain corresponds to 933 to 955 (CLEGVQLYLMLVEVFESEYSRKK). Residues 956 to 976 (YYYVAGYLFPATVVGVSAAID) form a helical membrane-spanning segment. The Extracellular portion of the chain corresponds to 977–994 (YKSYGTEKACWLHVDNYF). A helical membrane pass occupies residues 995–1015 (IWSFIGPVTFIILLNIIFLVI). At 1016 to 1056 (TLCKMVKHSNTLKPDSSRLENINNYRVCDGYYNTDLPGSWV) the chain is on the cytoplasmic side. Residues 1057 to 1077 (LGAFALLCLLGLTWSFGLLFI) form a helical membrane-spanning segment. At 1078–1081 (NEET) the chain is on the extracellular side. Residues 1082 to 1102 (IVMAYLFTIFNAFQGVFIFIF) traverse the membrane as a helical segment. Residues 1103 to 1478 (HCALQKKVRK…EGQMQLVTSL (376 aa)) are Cytoplasmic-facing. Residues 1378-1419 (AEDHLQSPNRDSLYTSMPNLRDSPYQESSPDMEEDLSPSRRS) form a disordered region. Residues 1383 to 1395 (QSPNRDSLYTSMP) are compositionally biased toward polar residues. Phosphoserine is present on residues serine 1393, serine 1428, and serine 1449.

The protein belongs to the G-protein coupled receptor 2 family. Adhesion G-protein coupled receptor (ADGR) subfamily. In terms of assembly, heterodimer of 2 chains generated by proteolytic processing; the large extracellular N-terminal fragment and the membrane-bound C-terminal fragment predominantly remain associated and non-covalently linked. In terms of processing, autoproteolytically processed at the GPS region of the GAIN-B domain; this cleavage modulates receptor activity. As to expression, ubiquitously expressed.

The protein localises to the postsynaptic cell membrane. Its activity is regulated as follows. Forms a heterodimer of 2 chains generated by proteolytic processing that remain associated through non-covalent interactions mediated by the GAIN-B domain. In the inactivated receptor, the Stachel sequence (also named stalk) is embedded in the GAIN-B domain, where it adopts a beta-strand conformation. On activation, the Stachel moves into the 7 transmembrane region and adopts a twisted hook-shaped configuration that forms contacts within the receptor, leading to coupling of a G-alpha protein, which activates signaling. The cleaved GAIN-B and N-terminal domains can then dissociate from the rest of the receptor. Functionally, orphan adhesion G-protein coupled receptor (aGPCR), which mediates synapse specificity. Ligand binding causes a conformation change that triggers signaling via guanine nucleotide-binding proteins (G proteins) and modulates the activity of downstream effectors. Following G-protein coupled receptor activation, associates with cell adhesion molecules that are expressed at the surface of adjacent cells to direct synapse specificity. Specifically mediates the establishment of perforant-path synapses on CA1-region pyramidal neurons in the hippocampus. Localizes to postsynaptic spines in excitatory synapses in the S.lacunosum-moleculare and interacts with presynaptic cell adhesion molecules, such as teneurins, promoting synapse formation. The protein is Adhesion G protein-coupled receptor L2 (ADGRL2) of Bos taurus (Bovine).